Reading from the N-terminus, the 388-residue chain is Dual specificity mitogen-activated protein kinase kinase 1 (388 aa).

Residues 1–20 (PIQLNPAPDGSAVNGTSSAE) form a disordered region. In terms of domain architecture, Protein kinase spans 61 to 356 (FEKISELGAG…LKQLMIHAFI (296 aa)). ATP contacts are provided by residues 67-75 (LGAGNGGVV) and K90. The active-site Proton acceptor is the D183. A phosphoserine; by RAF mark is found at S211 and S215. The tract at residues 275–299 (DSPVTETSPRQRAPGRPMSSYGSDS) is disordered.

Belongs to the protein kinase superfamily. STE Ser/Thr protein kinase family. MAP kinase kinase subfamily. Post-translationally, MAPKK is itself dependent on Ser/Thr phosphorylation for activity catalyzed by MAP kinase kinase kinases (RAF or MEKK1).

The protein resides in the cytoplasm. The protein localises to the cytoskeleton. Its subcellular location is the microtubule organizing center. It localises to the centrosome. It is found in the spindle pole body. The protein resides in the nucleus. It catalyses the reaction L-seryl-[protein] + ATP = O-phospho-L-seryl-[protein] + ADP + H(+). It carries out the reaction L-threonyl-[protein] + ATP = O-phospho-L-threonyl-[protein] + ADP + H(+). The catalysed reaction is L-tyrosyl-[protein] + ATP = O-phospho-L-tyrosyl-[protein] + ADP + H(+). Its function is as follows. Dual specificity protein kinase which acts as an essential component of the MAP kinase signal transduction pathway. Binding of extracellular ligands such as growth factors, cytokines and hormones to their cell-surface receptors activates RAS and this initiates RAF1 activation. RAF1 then further activates the dual-specificity protein kinases MAP2K1/MEK1 and MAP2K2/MEK2. Both MAP2K1/MEK1 and MAP2K2/MEK2 function specifically in the MAPK/ERK cascade, and catalyze the concomitant phosphorylation of a threonine and a tyrosine residue in a Thr-Glu-Tyr sequence located in the extracellular signal-regulated kinases MAPK3/ERK1 and MAPK1/ERK2, leading to their activation and further transduction of the signal within the MAPK/ERK cascade. Depending on the cellular context, this pathway mediates diverse biological functions such as cell growth, adhesion, survival and differentiation predominantly through the regulation of transcription, metabolism and cytoskeletal rearrangements. The protein is Dual specificity mitogen-activated protein kinase kinase 1 (MAP2K1) of Serinus canaria (Island canary).